Consider the following 140-residue polypeptide: Respiratory supercomplex factor 1, mitochondrial (140 aa).

An HIG1 domain is found at 1–79 (MNTLQKIAYR…KESAEQKQTR (79 aa)). The next 2 helical transmembrane spans lie at 16-32 (LVPL…VLAA) and 46-68 (YFRY…GMYY). The stretch at 68-126 (YQKESAEQKQTREDKLREKAKLREQLWIEELERRDQLIKARKQRLEESKKELMKVAQEG) forms a coiled coil.

The protein belongs to the RCF1 family. As to quaternary structure, associates with the respiratory chain complex III/complex IV supercomplex.

The protein localises to the mitochondrion membrane. Its function is as follows. Cytochrome c oxidase subunit which plays a role in assembly of respiratory supercomplexes. This Clavispora lusitaniae (strain ATCC 42720) (Yeast) protein is Respiratory supercomplex factor 1, mitochondrial (RCF1).